The sequence spans 144 residues: Cytochrome c-type biogenesis protein CcmE (144 aa).

Topologically, residues 1–7 (MKPRHKR) are cytoplasmic. Residues 8 to 28 (ALMIVAALAVIGIAALLILNA) traverse the membrane as a helical; Signal-anchor for type II membrane protein segment. Residues 29 to 144 (LNSNIALYVT…EQAQKNGSAK (116 aa)) lie on the Extracellular side of the membrane. Histidine 121 and tyrosine 125 together coordinate heme.

Belongs to the CcmE/CycJ family.

The protein resides in the cell membrane. In terms of biological role, heme chaperone required for the biogenesis of c-type cytochromes. Transiently binds heme delivered by CcmC and transfers the heme to apo-cytochromes in a process facilitated by CcmF and CcmH. In Polynucleobacter asymbioticus (strain DSM 18221 / CIP 109841 / QLW-P1DMWA-1) (Polynucleobacter necessarius subsp. asymbioticus), this protein is Cytochrome c-type biogenesis protein CcmE.